Reading from the N-terminus, the 754-residue chain is Phosphoribosylformylglycinamidine synthase subunit PurL (754 aa).

The interval methionine 1–leucine 21 is disordered. Residue histidine 54 is part of the active site. 2 residues coordinate ATP: tyrosine 57 and lysine 101. Glutamate 103 contributes to the Mg(2+) binding site. Substrate is bound by residues serine 104–histidine 107 and arginine 126. Histidine 105 serves as the catalytic Proton acceptor. A Mg(2+)-binding site is contributed by aspartate 127. Residue glutamine 252 participates in substrate binding. Aspartate 280 is a binding site for Mg(2+). Residue glutamate 324 to glutamine 326 participates in substrate binding. Positions 512 and 549 each coordinate ATP. Asparagine 550 contributes to the Mg(2+) binding site. Serine 552 serves as a coordination point for substrate.

It belongs to the FGAMS family. Monomer. Part of the FGAM synthase complex composed of 1 PurL, 1 PurQ and 2 PurS subunits.

The protein resides in the cytoplasm. The catalysed reaction is N(2)-formyl-N(1)-(5-phospho-beta-D-ribosyl)glycinamide + L-glutamine + ATP + H2O = 2-formamido-N(1)-(5-O-phospho-beta-D-ribosyl)acetamidine + L-glutamate + ADP + phosphate + H(+). It functions in the pathway purine metabolism; IMP biosynthesis via de novo pathway; 5-amino-1-(5-phospho-D-ribosyl)imidazole from N(2)-formyl-N(1)-(5-phospho-D-ribosyl)glycinamide: step 1/2. Its function is as follows. Part of the phosphoribosylformylglycinamidine synthase complex involved in the purines biosynthetic pathway. Catalyzes the ATP-dependent conversion of formylglycinamide ribonucleotide (FGAR) and glutamine to yield formylglycinamidine ribonucleotide (FGAM) and glutamate. The FGAM synthase complex is composed of three subunits. PurQ produces an ammonia molecule by converting glutamine to glutamate. PurL transfers the ammonia molecule to FGAR to form FGAM in an ATP-dependent manner. PurS interacts with PurQ and PurL and is thought to assist in the transfer of the ammonia molecule from PurQ to PurL. This is Phosphoribosylformylglycinamidine synthase subunit PurL from Mycobacterium bovis (strain ATCC BAA-935 / AF2122/97).